A 471-amino-acid polypeptide reads, in one-letter code: Ribulose bisphosphate carboxylase large chain (471 aa).

Residues asparagine 115 and threonine 165 each contribute to the substrate site. Catalysis depends on lysine 167, which acts as the Proton acceptor. Lysine 169 contributes to the substrate binding site. Positions 193, 195, and 196 each coordinate Mg(2+). The residue at position 193 (lysine 193) is an N6-carboxylysine. Residue histidine 286 is the Proton acceptor of the active site. The substrate site is built by arginine 287, histidine 319, and serine 371.

Belongs to the RuBisCO large chain family. Type I subfamily. As to quaternary structure, heterohexadecamer of 8 large chains and 8 small chains. It depends on Mg(2+) as a cofactor.

It is found in the carboxysome. It catalyses the reaction 2 (2R)-3-phosphoglycerate + 2 H(+) = D-ribulose 1,5-bisphosphate + CO2 + H2O. The catalysed reaction is D-ribulose 1,5-bisphosphate + O2 = 2-phosphoglycolate + (2R)-3-phosphoglycerate + 2 H(+). Its function is as follows. RuBisCO catalyzes two reactions: the carboxylation of D-ribulose 1,5-bisphosphate, the primary event in carbon dioxide fixation, as well as the oxidative fragmentation of the pentose substrate in the photorespiration process. Both reactions occur simultaneously and in competition at the same active site. The chain is Ribulose bisphosphate carboxylase large chain from Synechococcus sp. (strain RCC307).